A 399-amino-acid chain; its full sequence is Acetate kinase (399 aa).

Position 7 (N7) interacts with Mg(2+). Position 14 (K14) interacts with ATP. Substrate is bound at residue R91. D148 acts as the Proton donor/acceptor in catalysis. ATP-binding positions include 208-212 (HLGNG) and 283-285 (DFR). E384 contacts Mg(2+).

It belongs to the acetokinase family. As to quaternary structure, homodimer. The cofactor is Mg(2+). Mn(2+) serves as cofactor.

The protein resides in the cytoplasm. It carries out the reaction acetate + ATP = acetyl phosphate + ADP. Its pathway is metabolic intermediate biosynthesis; acetyl-CoA biosynthesis; acetyl-CoA from acetate: step 1/2. Catalyzes the formation of acetyl phosphate from acetate and ATP. Can also catalyze the reverse reaction. The chain is Acetate kinase from Dictyoglomus thermophilum (strain ATCC 35947 / DSM 3960 / H-6-12).